The primary structure comprises 130 residues: Small ribosomal subunit protein uS9 (130 aa).

The protein belongs to the universal ribosomal protein uS9 family.

The chain is Small ribosomal subunit protein uS9 from Vibrio campbellii (strain ATCC BAA-1116).